The sequence spans 337 residues: GTP 3',8-cyclase (337 aa).

One can recognise a Radical SAM core domain in the interval 1-226 (MNRVDYLRIS…REKIRQKWGL (226 aa)). Arginine 8 provides a ligand contact to GTP. The [4Fe-4S] cluster site is built by cysteine 15 and cysteine 19. S-adenosyl-L-methionine is bound at residue tyrosine 21. Position 22 (cysteine 22) interacts with [4Fe-4S] cluster. Position 60 (arginine 60) interacts with GTP. Glycine 64 lines the S-adenosyl-L-methionine pocket. Threonine 91 serves as a coordination point for GTP. Position 115 (serine 115) interacts with S-adenosyl-L-methionine. Position 155 (lysine 155) interacts with GTP. Residue methionine 189 participates in S-adenosyl-L-methionine binding. [4Fe-4S] cluster contacts are provided by cysteine 260 and cysteine 263. A GTP-binding site is contributed by 265-267 (RMR). Cysteine 277 contacts [4Fe-4S] cluster.

It belongs to the radical SAM superfamily. MoaA family. As to quaternary structure, monomer and homodimer. It depends on [4Fe-4S] cluster as a cofactor.

It catalyses the reaction GTP + AH2 + S-adenosyl-L-methionine = (8S)-3',8-cyclo-7,8-dihydroguanosine 5'-triphosphate + 5'-deoxyadenosine + L-methionine + A + H(+). Its pathway is cofactor biosynthesis; molybdopterin biosynthesis. Functionally, catalyzes the cyclization of GTP to (8S)-3',8-cyclo-7,8-dihydroguanosine 5'-triphosphate. This Crocosphaera subtropica (strain ATCC 51142 / BH68) (Cyanothece sp. (strain ATCC 51142)) protein is GTP 3',8-cyclase.